An 86-amino-acid polypeptide reads, in one-letter code: Large ribosomal subunit protein eL43 (86 aa).

Residues Cys-40, Cys-43, Cys-58, and Cys-61 each coordinate Zn(2+). The C4-type zinc finger occupies 40-61 (CPFCRSKAVIREAYGIYRCKKC).

It belongs to the eukaryotic ribosomal protein eL43 family. Putative zinc-binding subfamily. In terms of assembly, part of the 50S ribosomal subunit. Zn(2+) is required as a cofactor.

Functionally, binds to the 23S rRNA. In Nanoarchaeum equitans (strain Kin4-M), this protein is Large ribosomal subunit protein eL43.